The chain runs to 434 residues: Trigger factor (434 aa).

The PPIase FKBP-type domain maps to 161–246 (EDRATIDFSG…LKKVEERELP (86 aa)).

It belongs to the FKBP-type PPIase family. Tig subfamily.

It localises to the cytoplasm. It carries out the reaction [protein]-peptidylproline (omega=180) = [protein]-peptidylproline (omega=0). Functionally, involved in protein export. Acts as a chaperone by maintaining the newly synthesized protein in an open conformation. Functions as a peptidyl-prolyl cis-trans isomerase. This is Trigger factor from Erwinia tasmaniensis (strain DSM 17950 / CFBP 7177 / CIP 109463 / NCPPB 4357 / Et1/99).